The sequence spans 138 residues: Putative transcriptional regulatory protein NedR (138 aa).

The disordered stretch occupies residues 1-25; it reads MCWGRSWTFGRSSSKGWRPTSSASS. Over residues 9 to 25 the composition is skewed to polar residues; it reads FGRSSSKGWRPTSSASS.

In terms of biological role, may serve as a transcriptional regulator. The sequence is that of Putative transcriptional regulatory protein NedR (nedR) from Micromonospora viridifaciens.